A 685-amino-acid polypeptide reads, in one-letter code: Mannan-binding lectin serine protease 2 (685 aa).

The N-terminal stretch at 1 to 19 (MRLLIFLGLLWSLVATLLG) is a signal peptide. Residues 20–137 (SKWPEPVFGR…TGFEAFYAAE (118 aa)) form the CUB 1 domain. Residues glutamate 67 and aspartate 75 each contribute to the Ca(2+) site. A disulfide bond links cysteine 72 and cysteine 90. Asparagine 103 carries N-linked (GlcNAc...) asparagine glycosylation. Aspartate 120, serine 122, asparagine 123, aspartate 138, and glutamate 141 together coordinate Ca(2+). Residues 138–181 (DVDECRVSLGDSVPCDHYCHNYLGGYYCSCRAGYVLHQNKHTCS) form the EGF-like; calcium-binding domain. Disulfide bonds link cysteine 142-cysteine 156, cysteine 152-cysteine 165, cysteine 167-cysteine 180, cysteine 184-cysteine 211, and cysteine 241-cysteine 259. The Ca(2+) site is built by asparagine 158 and glycine 162. Asparagine 158 is modified ((3R)-3-hydroxyasparagine). The 113-residue stretch at 184-296 (CSGQVFTGRS…TGWKIHYTST (113 aa)) folds into the CUB 2 domain. N-linked (GlcNAc...) asparagine glycans are attached at residues asparagine 285 and asparagine 308. Sushi domains are found at residues 298-363 (RPCP…ECSI) and 364-431 (IDCG…VCEP). Cystine bridges form between cysteine 300-cysteine 348, cysteine 328-cysteine 361, cysteine 366-cysteine 411, cysteine 396-cysteine 429, cysteine 433-cysteine 552, cysteine 598-cysteine 617, and cysteine 628-cysteine 659. Residues 444-683 (IVGGQPAKPG…YIPWIENIIS (240 aa)) form the Peptidase S1 domain. Catalysis depends on charge relay system residues histidine 483 and aspartate 532. N-linked (GlcNAc...) asparagine glycosylation is present at asparagine 545. The active-site Charge relay system is the serine 632. Residue asparagine 641 is glycosylated (N-linked (GlcNAc...) asparagine).

This sequence belongs to the peptidase S1 family. In terms of assembly, homodimer; disulfide-linked. Binds MBL2. Isoform 2 binds to MASP1. Binds SERPING1. In terms of processing, the iron and 2-oxoglutarate dependent 3-hydroxylation of aspartate and asparagine is (R) stereospecific within EGF domains. As to expression, plasma.

The protein localises to the secreted. It carries out the reaction Selective cleavage after Arg-223 in complement component C2 (-Ser-Leu-Gly-Arg-|-Lys-Ile-Gln-Ile) and after Arg-76 in complement component C4 (-Gly-Leu-Gln-Arg-|-Ala-Leu-Glu-Ile).. Its function is as follows. Serum protease that plays an important role in the activation of the complement system via mannose-binding lectin. After activation by auto-catalytic cleavage it cleaves C2 and C4, leading to their activation and to the formation of C3 convertase. The sequence is that of Mannan-binding lectin serine protease 2 (Masp2) from Mus musculus (Mouse).